Reading from the N-terminus, the 321-residue chain is Lipoyl synthase (321 aa).

The [4Fe-4S] cluster site is built by Cys68, Cys73, Cys79, Cys94, Cys98, Cys101, and Ser308. The region spanning 80 to 297 is the Radical SAM core domain; that stretch reads FNHGTATFMI…KAEAMAMGFT (218 aa).

It belongs to the radical SAM superfamily. Lipoyl synthase family. The cofactor is [4Fe-4S] cluster.

It is found in the cytoplasm. The catalysed reaction is [[Fe-S] cluster scaffold protein carrying a second [4Fe-4S](2+) cluster] + N(6)-octanoyl-L-lysyl-[protein] + 2 oxidized [2Fe-2S]-[ferredoxin] + 2 S-adenosyl-L-methionine + 4 H(+) = [[Fe-S] cluster scaffold protein] + N(6)-[(R)-dihydrolipoyl]-L-lysyl-[protein] + 4 Fe(3+) + 2 hydrogen sulfide + 2 5'-deoxyadenosine + 2 L-methionine + 2 reduced [2Fe-2S]-[ferredoxin]. It participates in protein modification; protein lipoylation via endogenous pathway; protein N(6)-(lipoyl)lysine from octanoyl-[acyl-carrier-protein]: step 2/2. Its function is as follows. Catalyzes the radical-mediated insertion of two sulfur atoms into the C-6 and C-8 positions of the octanoyl moiety bound to the lipoyl domains of lipoate-dependent enzymes, thereby converting the octanoylated domains into lipoylated derivatives. This Enterobacter sp. (strain 638) protein is Lipoyl synthase.